Reading from the N-terminus, the 104-residue chain is Nucleoid-associated protein Ccon26_18480 (104 aa).

Over residues 16–34 (DVQKQAKQMEEESKNKEFG) the composition is skewed to basic and acidic residues. A disordered region spans residues 16–38 (DVQKQAKQMEEESKNKEFGAKSG).

This sequence belongs to the YbaB/EbfC family. In terms of assembly, homodimer.

Its subcellular location is the cytoplasm. It is found in the nucleoid. Binds to DNA and alters its conformation. May be involved in regulation of gene expression, nucleoid organization and DNA protection. The protein is Nucleoid-associated protein Ccon26_18480 of Campylobacter concisus (strain 13826).